We begin with the raw amino-acid sequence, 191 residues long: Putative glutathione-dependent formaldehyde-activating enzyme (191 aa).

Positions 20-166 (FSGGTLRCHC…FKSVGLETYD (147 aa)) constitute a CENP-V/GFA domain. C27, C29, C48, C50, C53, C95, and C98 together coordinate Zn(2+).

Belongs to the Gfa family. Requires Zn(2+) as cofactor.

It carries out the reaction S-(hydroxymethyl)glutathione = glutathione + formaldehyde. The protein operates within one-carbon metabolism; formaldehyde degradation; formate from formaldehyde (glutathione route): step 1/3. Catalyzes the condensation of formaldehyde and glutathione to S-hydroxymethylglutathione. The sequence is that of Putative glutathione-dependent formaldehyde-activating enzyme from Colletotrichum graminicola (strain M1.001 / M2 / FGSC 10212) (Maize anthracnose fungus).